Here is a 382-residue protein sequence, read N- to C-terminus: Lipid-A-disaccharide synthase (382 aa).

This sequence belongs to the LpxB family.

The enzyme catalyses 2-N,3-O-bis[(3R)-3-hydroxytetradecanoyl]-alpha-D-glucosaminyl 1-phosphate + UDP-2-N,3-O-bis[(3R)-3-hydroxytetradecanoyl]-alpha-D-glucosamine = lipid A disaccharide (E. coli) + UDP + H(+). The catalysed reaction is a lipid X + a UDP-2-N,3-O-bis[(3R)-3-hydroxyacyl]-alpha-D-glucosamine = a lipid A disaccharide + UDP + H(+). Its pathway is glycolipid biosynthesis; lipid IV(A) biosynthesis; lipid IV(A) from (3R)-3-hydroxytetradecanoyl-[acyl-carrier-protein] and UDP-N-acetyl-alpha-D-glucosamine: step 5/6. In terms of biological role, condensation of UDP-2,3-diacylglucosamine and 2,3-diacylglucosamine-1-phosphate to form lipid A disaccharide, a precursor of lipid A, a phosphorylated glycolipid that anchors the lipopolysaccharide to the outer membrane of the cell. The chain is Lipid-A-disaccharide synthase from Salmonella typhimurium (strain LT2 / SGSC1412 / ATCC 700720).